Reading from the N-terminus, the 460-residue chain is Argininosuccinate lyase (460 aa).

This sequence belongs to the lyase 1 family. Argininosuccinate lyase subfamily.

It localises to the cytoplasm. It carries out the reaction 2-(N(omega)-L-arginino)succinate = fumarate + L-arginine. Its pathway is amino-acid biosynthesis; L-arginine biosynthesis; L-arginine from L-ornithine and carbamoyl phosphate: step 3/3. The chain is Argininosuccinate lyase from Campylobacter jejuni subsp. doylei (strain ATCC BAA-1458 / RM4099 / 269.97).